The chain runs to 491 residues: Probable G-protein coupled receptor Mth-like 7 (491 aa).

Positions 1–22 are cleaved as a signal peptide; sequence MRLPWVIFCTVLLLIFTNNSNA. N-linked (GlcNAc...) asparagine glycans are attached at residues Asn18 and Asn42. Over 23-167 the chain is Extracellular; it reads DIPGCNYYDT…EEVSIQIFNK (145 aa). 3 disulfide bridges follow: Cys27–Cys80, Cys82–Cys87, and Cys92–Cys103. A helical transmembrane segment spans residues 168-188; that stretch reads CGLIVWFQDGKFWVTVDLFME. The Cytoplasmic portion of the chain corresponds to 189-222; sequence KQDYCLYRHNFDSDFPKSMWIIRHRCTSHISPGS. A helical transmembrane segment spans residues 223–243; it reads LEILIITMICFVLTIAVYLYI. Residues 244 to 252 lie on the Extracellular side of the membrane; sequence KKLRNVTGK. Asn248 carries N-linked (GlcNAc...) asparagine glycosylation. The helical transmembrane segment at 253 to 273 threads the bilayer; it reads CIVCCIVSRFIQCLIMILDHL. Topologically, residues 274-325 are cytoplasmic; sequence NLLNGICSPAGYSSHFFRMASNLWLSVISYHTWKVLTSLNRVDPNYRFLRYN. The chain crosses the membrane as a helical span at residues 326 to 346; it reads AFVWSTAAIMTGSIYIVNQIW. Residues 347-372 are Extracellular-facing; that stretch reads ENDPSKWNWLPLVGFIRCSVKDWHPS. The helical transmembrane segment at 373 to 393 threads the bilayer; sequence VWIYISGPSLALSTFNVAMFA. The Cytoplasmic portion of the chain corresponds to 394-434; sequence LTAIYIRKVKGGINKFTNEEEGRINCINFDSQTYLQFLRLS. Residues 435–455 traverse the membrane as a helical segment; the sequence is IVMGLTWIFNVIPYSARLHIF. Over 456–458 the chain is Extracellular; sequence WEW. Residues 459–479 traverse the membrane as a helical segment; sequence VGIISEYFHSAFGIVLFVLLV. At 480–491 the chain is on the cytoplasmic side; that stretch reads LKRSTWTLMMDS.

Belongs to the G-protein coupled receptor 2 family. Mth subfamily.

Its subcellular location is the cell membrane. This Drosophila melanogaster (Fruit fly) protein is Probable G-protein coupled receptor Mth-like 7 (mthl7).